A 100-amino-acid polypeptide reads, in one-letter code: Small ribosomal subunit protein uS14c (100 aa).

This sequence belongs to the universal ribosomal protein uS14 family. In terms of assembly, part of the 30S ribosomal subunit.

It localises to the plastid. Its subcellular location is the chloroplast. Its function is as follows. Binds 16S rRNA, required for the assembly of 30S particles. This chain is Small ribosomal subunit protein uS14c, found in Stigeoclonium helveticum (Green alga).